Consider the following 307-residue polypeptide: uncharacterized protein (307 aa).

Residues 254–278 (HSRHHRRHHRRHHHHHHQNSSHSDE) are disordered. The segment covering 255–272 (SRHHRRHHRRHHHHHHQN) has biased composition (basic residues).

This sequence to yeast YOR062c.

This is an uncharacterized protein from Saccharomyces cerevisiae (strain ATCC 204508 / S288c) (Baker's yeast).